Here is a 61-residue protein sequence, read N- to C-terminus: UPF0434 protein Pmen_1615 (61 aa).

The protein belongs to the UPF0434 family.

The polypeptide is UPF0434 protein Pmen_1615 (Ectopseudomonas mendocina (strain ymp) (Pseudomonas mendocina)).